Consider the following 259-residue polypeptide: NAD kinase (259 aa).

The Proton acceptor role is filled by aspartate 49. Residues 49 to 50 (DG), arginine 54, 118 to 119 (NE), aspartate 148, alanine 156, 159 to 164 (TAYNYS), and alanine 183 contribute to the NAD(+) site.

It belongs to the NAD kinase family. The cofactor is a divalent metal cation.

The protein localises to the cytoplasm. The catalysed reaction is NAD(+) + ATP = ADP + NADP(+) + H(+). In terms of biological role, involved in the regulation of the intracellular balance of NAD and NADP, and is a key enzyme in the biosynthesis of NADP. Catalyzes specifically the phosphorylation on 2'-hydroxyl of the adenosine moiety of NAD to yield NADP. This is NAD kinase from Xylella fastidiosa (strain Temecula1 / ATCC 700964).